The chain runs to 422 residues: Enolase (422 aa).

Gln162 serves as a coordination point for (2R)-2-phosphoglycerate. Glu204 serves as the catalytic Proton donor. Mg(2+)-binding residues include Asp241, Glu284, and Asp311. Positions 336, 365, 366, and 387 each coordinate (2R)-2-phosphoglycerate. The Proton acceptor role is filled by Lys336.

The protein belongs to the enolase family. Mg(2+) serves as cofactor.

The protein localises to the cytoplasm. The protein resides in the secreted. It is found in the cell surface. The catalysed reaction is (2R)-2-phosphoglycerate = phosphoenolpyruvate + H2O. It functions in the pathway carbohydrate degradation; glycolysis; pyruvate from D-glyceraldehyde 3-phosphate: step 4/5. Functionally, catalyzes the reversible conversion of 2-phosphoglycerate (2-PG) into phosphoenolpyruvate (PEP). It is essential for the degradation of carbohydrates via glycolysis. The chain is Enolase from Bartonella tribocorum (strain CIP 105476 / IBS 506).